The primary structure comprises 352 residues: tRNA pseudouridine synthase D (352 aa).

Asp-78 functions as the Nucleophile in the catalytic mechanism. In terms of domain architecture, TRUD spans 153 to 299; it reads GVPNYYGEQR…LDQDRRPLLL (147 aa).

It belongs to the pseudouridine synthase TruD family.

It carries out the reaction uridine(13) in tRNA = pseudouridine(13) in tRNA. Responsible for synthesis of pseudouridine from uracil-13 in transfer RNAs. The polypeptide is tRNA pseudouridine synthase D (Aeromonas salmonicida (strain A449)).